A 644-amino-acid chain; its full sequence is DNA mismatch repair protein MutL (644 aa).

Over residues 340–360 the composition is skewed to basic and acidic residues; sequence KKEKDESVQEQFKFEHTKPRE. The tract at residues 340–425 is disordered; sequence KKEKDESVQE…ETVREEKEWT (86 aa). Positions 387-400 are enriched in low complexity; the sequence is QLWQPPKQEWQPPQ. Positions 416–425 are enriched in basic and acidic residues; that stretch reads ETVREEKEWT.

The protein belongs to the DNA mismatch repair MutL/HexB family.

Its function is as follows. This protein is involved in the repair of mismatches in DNA. It is required for dam-dependent methyl-directed DNA mismatch repair. May act as a 'molecular matchmaker', a protein that promotes the formation of a stable complex between two or more DNA-binding proteins in an ATP-dependent manner without itself being part of a final effector complex. This is DNA mismatch repair protein MutL from Bacillus mycoides (strain KBAB4) (Bacillus weihenstephanensis).